Consider the following 79-residue polypeptide: Conotoxin ArMSGL-0121 (79 aa).

The signal sequence occupies residues 1–20 (MSRLGIMVLTLLLLVFIVTS). A propeptide spanning residues 21–44 (HQDAGEKQATQRNAINFRWRRSFT) is cleaved from the precursor. Intrachain disulfides connect Cys-52–Cys-64, Cys-56–Cys-73, and Cys-63–Cys-77. Leu-78 carries the leucine amide modification.

It belongs to the conotoxin O3 superfamily. As to expression, expressed by the venom duct.

It localises to the secreted. The protein is Conotoxin ArMSGL-0121 of Conus arenatus (Sand-dusted cone).